The chain runs to 26 residues: Glycyl-poneratoxin (26 aa).

Arg-25 is modified (arginine amide; in delta-paraponeritoxin-Pc1a).

In terms of processing, the glycine-PoTx is a non-amidated form of poneratoxin, with an extra-Gly at C-terminus. This loss of amidation does not alter toxin activity on Nav1.7/SCN9A. In terms of tissue distribution, expressed by the venom gland.

It localises to the secreted. Its function is as follows. Toxin that causes pain in vertebrates by targeting tetrodotoxin (TTX)-sensitive sodium channels in peripheral sensory neurons. Also blocks synaptic transmission and stimulates smooth muscle contraction. Converts the normally rapidly activating and inactivating sodium channel current into one that does not inactivate. Is active on both Nav1.6/SCN8A and Nav1.7/SCN9A sodium channels, with a much potent activity on Nav1.6/SCN8A (EC(50)=97 nM on human channels) than on Nav1.7/SCN9A (EC(50)=2.3 uM on human and EC(50)=1.8 uM on mouse channels). On these channels, causes a sustained current, a reduction in peak current amplitude and a hyperpolarising shift. Modulates Nav1.7/SCN9A in a non-competitive manner with TTX or tetracaine. Toxin-induced persistant current is very slowly reversible with repeated wash steps over 30 minutes. In vivo, shallow intraplantar injection in mice causes immediate, long-lasting and near-maximal nocifensive behaviors, which decrease with coinjection of TTX. When tested on insects, causes paralysis but not mortality at high doses. This chain is Glycyl-poneratoxin, found in Paraponera clavata (Bullet ant).